The sequence spans 73 residues: UPF0435 protein lmo1707 (73 aa).

This sequence belongs to the UPF0435 family.

This Listeria monocytogenes serovar 1/2a (strain ATCC BAA-679 / EGD-e) protein is UPF0435 protein lmo1707.